We begin with the raw amino-acid sequence, 446 residues long: Maturase K (446 aa).

It belongs to the intron maturase 2 family. MatK subfamily.

Its subcellular location is the plastid. The protein localises to the chloroplast. In terms of biological role, usually encoded in the trnK tRNA gene intron. Probably assists in splicing its own and other chloroplast group II introns. This chain is Maturase K, found in Phalaenopsis aphrodite subsp. formosana (Moth orchid).